The chain runs to 123 residues: Ribonuclease P protein component (123 aa).

Belongs to the RnpA family. Consists of a catalytic RNA component (M1 or rnpB) and a protein subunit.

The enzyme catalyses Endonucleolytic cleavage of RNA, removing 5'-extranucleotides from tRNA precursor.. Its function is as follows. RNaseP catalyzes the removal of the 5'-leader sequence from pre-tRNA to produce the mature 5'-terminus. It can also cleave other RNA substrates such as 4.5S RNA. The protein component plays an auxiliary but essential role in vivo by binding to the 5'-leader sequence and broadening the substrate specificity of the ribozyme. In Herpetosiphon aurantiacus (strain ATCC 23779 / DSM 785 / 114-95), this protein is Ribonuclease P protein component.